Reading from the N-terminus, the 567-residue chain is 2-isopropylmalate synthase (567 aa).

The Pyruvate carboxyltransferase domain maps to 28 to 302 (PQWCSVDLRD…NPELDFSDIN (275 aa)). Mg(2+)-binding residues include Asp37, His241, His243, and Asn277. The tract at residues 435 to 567 (IRTPLQLNYH…DMDTQEEDIA (133 aa)) is regulatory domain.

Belongs to the alpha-IPM synthase/homocitrate synthase family. LeuA type 2 subfamily. As to quaternary structure, homodimer. It depends on Mg(2+) as a cofactor.

It is found in the cytoplasm. The catalysed reaction is 3-methyl-2-oxobutanoate + acetyl-CoA + H2O = (2S)-2-isopropylmalate + CoA + H(+). Its pathway is amino-acid biosynthesis; L-leucine biosynthesis; L-leucine from 3-methyl-2-oxobutanoate: step 1/4. Functionally, catalyzes the condensation of the acetyl group of acetyl-CoA with 3-methyl-2-oxobutanoate (2-ketoisovalerate) to form 3-carboxy-3-hydroxy-4-methylpentanoate (2-isopropylmalate). This is 2-isopropylmalate synthase from Acetoanaerobium sticklandii (strain ATCC 12662 / DSM 519 / JCM 1433 / CCUG 9281 / NCIMB 10654 / HF) (Clostridium sticklandii).